Here is a 707-residue protein sequence, read N- to C-terminus: Toxin RTX-I translocation ATP-binding protein (707 aa).

One can recognise a Peptidase C39 domain in the interval 1–125 (MDFYREEDYG…SLYQGKLILV (125 aa)). His83 is a catalytic residue. An ABC transmembrane type-1 domain is found at 154–436 (FIETLIVSIF…LAQLWQDFQQ (283 aa)). The next 5 helical transmembrane spans lie at 158 to 178 (LIVSIFLQIFALITPLFFQVV), 188 to 208 (FSTLNVITVALAIVVLFEIVL), 295 to 315 (LVILGSLPFYMGWSIFISPIL), 387 to 407 (VVMVITLWLGAHLVISGDLSI), and 410 to 430 (LIAFNMLSGQVIAPVIRLAQL). The 236-residue stretch at 468–703 (ITFRNIRFRY…PNGLYHYLHQ (236 aa)) folds into the ABC transporter domain. Position 502–509 (502–509 (GRSGSGKS)) interacts with ATP.

This sequence belongs to the ABC transporter superfamily. Protein-1 exporter (TC 3.A.1.109) family. In terms of assembly, homodimer.

Its subcellular location is the cell membrane. Functionally, involved in the transport of the toxin RTX-I as well as that of RTX-II. In Actinobacillus pleuropneumoniae (Haemophilus pleuropneumoniae), this protein is Toxin RTX-I translocation ATP-binding protein (apxIB).